The chain runs to 183 residues: Small ribosomal subunit protein eS10z (183 aa).

The tract at residues 91-183 (LKKSARPPGR…GAGPTSSSME (93 aa)) is disordered. Over residues 109–130 (DRPRGPPRFEGDRPRFGDRDGY) the composition is skewed to basic and acidic residues. Gly residues-rich tracts occupy residues 131–146 (RGGP…GEKG) and 161–175 (GRPG…GFGA).

Belongs to the eukaryotic ribosomal protein eS10 family.

Its subcellular location is the cytoplasm. The chain is Small ribosomal subunit protein eS10z from Oryza sativa subsp. japonica (Rice).